The following is a 556-amino-acid chain: Transcription factor IIIB 70 kDa subunit (556 aa).

The TFIIB-type zinc finger occupies 8 to 41; it reads SSRKCKNCGSTDFVRDISNTTNELICKVCGLVTE. Residues Cys-12, Cys-15, Cys-33, and Cys-36 each contribute to the Zn(2+) site. A run of 2 repeats spans residues 98–174 and 193–272. Residues 98–272 are interaction with TBP and with the Pol III subunit C34; it reads LKAVSYALNI…EETLQQRLNE (175 aa). The segment at 284-556 is interaction with TBP; sequence KEFRDDETEV…DAINGLFGQK (273 aa). Disordered regions lie at residues 287–309 and 477–501; these read RDDE…SFDK and ADLA…QSSA. A compositionally biased stretch (basic and acidic residues) spans 295–309; that stretch reads EGERSAESKPPSFDK. A compositionally biased stretch (basic residues) spans 486–495; the sequence is LRKKRSKRTN.

The protein belongs to the TFIIB family. As to quaternary structure, TFIIIB comprises the TATA-binding protein (TBP), the B-related factor (BRF) and a 70 kDa polypeptide.

The protein resides in the nucleus. General activator of RNA polymerase III transcription. Interacts with TBP. Binds to Pol III subunit C34 and to the TAU135 component of TFIIIC. This chain is Transcription factor IIIB 70 kDa subunit (TDS4), found in Kluyveromyces lactis (strain ATCC 8585 / CBS 2359 / DSM 70799 / NBRC 1267 / NRRL Y-1140 / WM37) (Yeast).